The following is a 432-amino-acid chain: Enolase (432 aa).

Glutamine 163 contacts (2R)-2-phosphoglycerate. Glutamate 205 functions as the Proton donor in the catalytic mechanism. Residues aspartate 242, glutamate 289, and aspartate 316 each contribute to the Mg(2+) site. Residues lysine 341, arginine 370, serine 371, and lysine 392 each coordinate (2R)-2-phosphoglycerate. Catalysis depends on lysine 341, which acts as the Proton acceptor.

This sequence belongs to the enolase family. It depends on Mg(2+) as a cofactor. In terms of processing, probably phosphorylated.

It localises to the cytoplasm. Its subcellular location is the secreted. The protein localises to the cell surface. It catalyses the reaction (2R)-2-phosphoglycerate = phosphoenolpyruvate + H2O. It functions in the pathway carbohydrate degradation; glycolysis; pyruvate from D-glyceraldehyde 3-phosphate: step 4/5. Its function is as follows. Catalyzes the reversible conversion of 2-phosphoglycerate (2-PG) into phosphoenolpyruvate (PEP). It is essential for the degradation of carbohydrates via glycolysis. 'Moonlights' as a plasminogen receptor. Binds plasminogen and human salivary mucin MG2 when expressed on the bacterial cell surface, potentially allowing the bacterium to acquire surface-associated proteolytic activity that may help the dissemination through oral tissues and entrance into the blood stream. This Streptococcus mutans serotype c (strain ATCC 700610 / UA159) protein is Enolase.